Reading from the N-terminus, the 465-residue chain is tRNA modification GTPase MnmE (465 aa).

(6S)-5-formyl-5,6,7,8-tetrahydrofolate-binding residues include Arg-23, Glu-81, and Lys-120. The TrmE-type G domain occupies Gly-217–Gly-389. Asn-227 is a K(+) binding site. Residues Asn-227 to Ser-232, Thr-246 to Thr-252, and Asp-271 to Gly-274 each bind GTP. Ser-231 contributes to the Mg(2+) binding site. Residues Thr-246, Val-248, and Thr-251 each coordinate K(+). Mg(2+) is bound at residue Thr-252. Lys-465 contributes to the (6S)-5-formyl-5,6,7,8-tetrahydrofolate binding site.

Belongs to the TRAFAC class TrmE-Era-EngA-EngB-Septin-like GTPase superfamily. TrmE GTPase family. In terms of assembly, homodimer. Heterotetramer of two MnmE and two MnmG subunits. It depends on K(+) as a cofactor.

Its subcellular location is the cytoplasm. Its function is as follows. Exhibits a very high intrinsic GTPase hydrolysis rate. Involved in the addition of a carboxymethylaminomethyl (cmnm) group at the wobble position (U34) of certain tRNAs, forming tRNA-cmnm(5)s(2)U34. The protein is tRNA modification GTPase MnmE of Psychrobacter sp. (strain PRwf-1).